The following is a 158-amino-acid chain: NAD(P)H-quinone oxidoreductase subunit J, chloroplastic (158 aa).

It belongs to the complex I 30 kDa subunit family. In terms of assembly, NDH is composed of at least 16 different subunits, 5 of which are encoded in the nucleus.

The protein localises to the plastid. It localises to the chloroplast thylakoid membrane. The catalysed reaction is a plastoquinone + NADH + (n+1) H(+)(in) = a plastoquinol + NAD(+) + n H(+)(out). It carries out the reaction a plastoquinone + NADPH + (n+1) H(+)(in) = a plastoquinol + NADP(+) + n H(+)(out). In terms of biological role, NDH shuttles electrons from NAD(P)H:plastoquinone, via FMN and iron-sulfur (Fe-S) centers, to quinones in the photosynthetic chain and possibly in a chloroplast respiratory chain. The immediate electron acceptor for the enzyme in this species is believed to be plastoquinone. Couples the redox reaction to proton translocation, and thus conserves the redox energy in a proton gradient. The protein is NAD(P)H-quinone oxidoreductase subunit J, chloroplastic of Cryptomeria japonica (Japanese cedar).